The chain runs to 331 residues: 6-phosphogluconolactonase (331 aa).

It belongs to the cycloisomerase 2 family.

The catalysed reaction is 6-phospho-D-glucono-1,5-lactone + H2O = 6-phospho-D-gluconate + H(+). It participates in carbohydrate degradation; pentose phosphate pathway; D-ribulose 5-phosphate from D-glucose 6-phosphate (oxidative stage): step 2/3. Catalyzes the hydrolysis of 6-phosphogluconolactone to 6-phosphogluconate. This is 6-phosphogluconolactonase from Salmonella agona (strain SL483).